A 33-amino-acid chain; its full sequence is Photosystem II reaction center protein Psb30 (33 aa).

Residues 8-28 form a helical membrane-spanning segment; sequence QLGSLLLITVAGPLIVFFLFI.

This sequence belongs to the Psb30/Ycf12 family. As to quaternary structure, PSII is composed of 1 copy each of membrane proteins PsbA, PsbB, PsbC, PsbD, PsbE, PsbF, PsbH, PsbI, PsbJ, PsbK, PsbL, PsbM, PsbT, PsbY, PsbZ, Psb30/Ycf12, peripheral proteins of the oxygen-evolving complex and a large number of cofactors. It forms dimeric complexes.

The protein resides in the plastid. The protein localises to the chloroplast thylakoid membrane. Its function is as follows. A core subunit of photosystem II (PSII), probably helps stabilize the reaction center. This chain is Photosystem II reaction center protein Psb30, found in Euglena anabaena (Euglenaria anabaena).